The chain runs to 501 residues: E3 ubiquitin-protein ligase TRIM35 (501 aa).

Residue M1 is modified to N-acetylmethionine. S8 is modified (phosphoserine). The segment at 21-61 (CAVCYDPFRDAVTLRCGHNFCRRCVSGCWEVQTTPSCPVCK) adopts an RING-type zinc-finger fold. The segment at 96–137 (RSPRPCRAHRAPLTLFCLEDKELLCCACQADARHQEHRVQPI) adopts a B box-type zinc-finger fold. Positions 101, 104, 123, and 129 each coordinate Zn(2+). Residues 200 to 252 (VEEQATLDAMKEESRKKHLQAEEKMKQLAEQTEALAREIERLQMEMKEDDMTF) adopt a coiled-coil conformation. Residues 284-495 (LESLQYRVWK…LRICHLRVSI (212 aa)) form the B30.2/SPRY domain.

Belongs to the TRIM/RBCC family. As to quaternary structure, interacts with PKM isoform M2, but not isoform M1; this interaction may compete with that between PKM and FGFR1, and hence reduces FGFR1-dependent tyrosine phosphorylation of PKM. Interacts with IRF7; this interaction promotes IRF7 proteasomal degradation. Interacts with TRAF3; this interaction promotes TRAF3 activation. As to expression, widely expressed. Highly expressed in brain, heart, kidney, spleen, skeletal muscle, lung and thymus. Lower expression found in stomach, large intestine and bone marrow.

It is found in the cytoplasm. The protein localises to the nucleus. The catalysed reaction is S-ubiquitinyl-[E2 ubiquitin-conjugating enzyme]-L-cysteine + [acceptor protein]-L-lysine = [E2 ubiquitin-conjugating enzyme]-L-cysteine + N(6)-ubiquitinyl-[acceptor protein]-L-lysine.. It functions in the pathway protein modification; protein ubiquitination. In terms of biological role, E3 ubiquitin-protein ligase that participates in multiple biological processes including cell death, glucose metabolism, and in particular, the innate immune response. Mediates 'Lys-63'-linked polyubiquitination of TRAF3 thereby promoting type I interferon production via RIG-I signaling pathway. Can also catalyze 'Lys-48'-linked polyubiquitination and proteasomal degradation of viral proteins such as influenza virus PB2. Acts as a negative feedback regulator of TLR7- and TLR9-triggered signaling. Mechanistically, promotes the 'Lys-48'-linked ubiquitination of IRF7 and induces its degradation via a proteasome-dependent pathway. Reduces FGFR1-dependent tyrosine phosphorylation of PKM, inhibiting PKM-dependent lactate production, glucose metabolism, and cell growth. The polypeptide is E3 ubiquitin-protein ligase TRIM35 (Trim35) (Mus musculus (Mouse)).